Reading from the N-terminus, the 445-residue chain is Exodeoxyribonuclease 7 large subunit (445 aa).

The protein belongs to the XseA family. Heterooligomer composed of large and small subunits.

The protein resides in the cytoplasm. The enzyme catalyses Exonucleolytic cleavage in either 5'- to 3'- or 3'- to 5'-direction to yield nucleoside 5'-phosphates.. Its function is as follows. Bidirectionally degrades single-stranded DNA into large acid-insoluble oligonucleotides, which are then degraded further into small acid-soluble oligonucleotides. The polypeptide is Exodeoxyribonuclease 7 large subunit (Shewanella pealeana (strain ATCC 700345 / ANG-SQ1)).